The sequence spans 387 residues: GTPase Obg (387 aa).

The 159-residue stretch at 1-159 folds into the Obg domain; it reads MKFVDEVEIR…RSLKLELLLL (159 aa). The OBG-type G domain occupies 160–333; sequence ADVGLLGLPN…LTQKVMTFIE (174 aa). GTP contacts are provided by residues 166 to 173, 191 to 195, 213 to 216, 283 to 286, and 314 to 316; these read GLPNAGKS, FTTLV, DIPG, NKLD, and SAF. Positions 173 and 193 each coordinate Mg(2+). Positions 361 to 387 are disordered; the sequence is AAHSQDDDLDDDDWDEDDYDVEVEYRQ. Acidic residues predominate over residues 367–387; sequence DDLDDDDWDEDDYDVEVEYRQ.

This sequence belongs to the TRAFAC class OBG-HflX-like GTPase superfamily. OBG GTPase family. In terms of assembly, monomer. Mg(2+) is required as a cofactor.

The protein localises to the cytoplasm. An essential GTPase which binds GTP, GDP and possibly (p)ppGpp with moderate affinity, with high nucleotide exchange rates and a fairly low GTP hydrolysis rate. Plays a role in control of the cell cycle, stress response, ribosome biogenesis and in those bacteria that undergo differentiation, in morphogenesis control. The sequence is that of GTPase Obg from Colwellia psychrerythraea (strain 34H / ATCC BAA-681) (Vibrio psychroerythus).